We begin with the raw amino-acid sequence, 391 residues long: uncharacterized protein (391 aa).

Helical transmembrane passes span 7–27 (FILV…LPVI), 39–59 (AING…SPFM), 66–88 (LGFK…GFIW), 92–111 (VWVW…MLHF), 131–151 (SIYG…VPLV), 156–176 (SLPF…VFFL), 197–217 (FYQA…YGFL), 239–259 (VAII…PLGI), 269–289 (VLLV…VFPS), 292–312 (VIGG…TLGI), 329–349 (LLCG…GGWY), and 356–376 (ANLF…LVLG).

This sequence belongs to the major facilitator superfamily.

The protein resides in the cell membrane. This is an uncharacterized protein from Bacillus subtilis (strain 168).